Consider the following 148-residue polypeptide: Large ribosomal subunit protein uL15 (148 aa).

The span at Met1 to Gly30 shows a compositional bias: basic residues. The disordered stretch occupies residues Met1–Gly37.

It belongs to the universal ribosomal protein uL15 family.

The polypeptide is Large ribosomal subunit protein uL15 (RpL27A) (Tenebrio molitor (Yellow mealworm beetle)).